Reading from the N-terminus, the 696-residue chain is DNA-directed RNA polymerase subunit beta N-terminal section (696 aa).

This sequence belongs to the RNA polymerase beta chain family. In terms of assembly, in plastids the minimal PEP RNA polymerase catalytic core is composed of four subunits: alpha, beta, beta', and beta''. When a (nuclear-encoded) sigma factor is associated with the core the holoenzyme is formed, which can initiate transcription.

Its subcellular location is the plastid. The protein resides in the chloroplast. It catalyses the reaction RNA(n) + a ribonucleoside 5'-triphosphate = RNA(n+1) + diphosphate. Its function is as follows. DNA-dependent RNA polymerase catalyzes the transcription of DNA into RNA using the four ribonucleoside triphosphates as substrates. This is DNA-directed RNA polymerase subunit beta N-terminal section (rpoB1) from Stigeoclonium helveticum (Green alga).